Consider the following 467-residue polypeptide: ADP-dependent glucose/glucosamine kinase (467 aa).

Residues 10–467 form the ADPK domain; sequence RLWKRLYVNA…FVSEFGMRKR (458 aa). Residues Asp42, Glu96, Gly120, 120 to 121, His184, and Asp211 each bind D-glucose; that span reads GQ. Residue Glu279 participates in Mg(2+) binding. Position 305 (Asn305) interacts with ADP. Residue Glu308 coordinates Mg(2+). ADP contacts are provided by residues 352–353, Val440, and Gly450; that span reads HT. Asp451 contributes to the D-glucose binding site. A Mg(2+)-binding site is contributed by Asp451. Catalysis depends on Asp451, which acts as the Proton acceptor.

This sequence belongs to the ADP-dependent glucokinase family. As to quaternary structure, monomer. Mg(2+) is required as a cofactor.

The protein localises to the cytoplasm. It carries out the reaction D-glucose + ADP = D-glucose 6-phosphate + AMP + H(+). It catalyses the reaction D-glucosamine + ADP = D-glucosamine 6-phosphate + AMP + H(+). The protein operates within carbohydrate degradation; glycolysis. Functionally, catalyzes the ADP-dependent phosphorylation of D-glucose to D-glucose 6-phosphate and glucosamine to glucosamine 6-phosphate. Can also use CDP as the phosphoryl group donor and D-1,5-anhydroglucitol as the phosphoryl group acceptor. The polypeptide is ADP-dependent glucose/glucosamine kinase (Thermococcus litoralis (strain ATCC 51850 / DSM 5473 / JCM 8560 / NS-C)).